A 26-amino-acid chain; its full sequence is Histone H2B.1, sperm (26 aa).

Residues 1–26 (MPSQKSPTKRSPTKRSPQKGGKGAKR) are disordered. 3 short sequence motifs (SPKK motif) span residues 6 to 9 (SPTK), 11 to 14 (SPTK), and 16 to 19 (SPQK). Residues 7–26 (PTKRSPTKRSPQKGGKGAKR) show a composition bias toward basic residues. A phosphoserine mark is found at Ser11 and Ser16.

This sequence belongs to the histone H2B family. In terms of assembly, the nucleosome is a histone octamer containing two molecules each of H2A, H2B, H3 and H4 assembled in one H3-H4 heterotetramer and two H2A-H2B heterodimers. The octamer wraps approximately 147 bp of DNA. In terms of processing, monoubiquitination gives a specific tag for epigenetic transcriptional activation and is also prerequisite for histone H3 'Lys-4' and 'Lys-79' methylation. Post-translationally, phosphorylated on SPKK motifs 2 and 3; which may regulate DNA binding. Dephosphorylated during maturation of spermatids to mature sperm and rephosphorylated at fertilization.

The protein localises to the nucleus. Its subcellular location is the chromosome. In terms of biological role, core component of nucleosome. Nucleosomes wrap and compact DNA into chromatin, limiting DNA accessibility to the cellular machineries which require DNA as a template. Histones thereby play a central role in transcription regulation, DNA repair, DNA replication and chromosomal stability. DNA accessibility is regulated via a complex set of post-translational modifications of histones, also called histone code, and nucleosome remodeling. This is Histone H2B.1, sperm from Echinus esculentus (Sea urchin).